A 618-amino-acid chain; its full sequence is 1-deoxy-D-xylulose-5-phosphate synthase (618 aa).

Residues histidine 70 and 111–113 each bind thiamine diphosphate; that span reads GHS. Aspartate 142 serves as a coordination point for Mg(2+). Residues 143–144, asparagine 171, tyrosine 278, and glutamate 360 each bind thiamine diphosphate; that span reads GS. Residue asparagine 171 participates in Mg(2+) binding.

Belongs to the transketolase family. DXPS subfamily. In terms of assembly, homodimer. It depends on Mg(2+) as a cofactor. Thiamine diphosphate is required as a cofactor.

It carries out the reaction D-glyceraldehyde 3-phosphate + pyruvate + H(+) = 1-deoxy-D-xylulose 5-phosphate + CO2. The protein operates within metabolic intermediate biosynthesis; 1-deoxy-D-xylulose 5-phosphate biosynthesis; 1-deoxy-D-xylulose 5-phosphate from D-glyceraldehyde 3-phosphate and pyruvate: step 1/1. In terms of biological role, catalyzes the acyloin condensation reaction between C atoms 2 and 3 of pyruvate and glyceraldehyde 3-phosphate to yield 1-deoxy-D-xylulose-5-phosphate (DXP). The chain is 1-deoxy-D-xylulose-5-phosphate synthase from Helicobacter pylori (strain G27).